Consider the following 82-residue polypeptide: U16-lycotoxin-Ls1a (82 aa).

The first 22 residues, 1-22 (MSPKVQALLLLVGLITFLAVHA), serve as a signal peptide directing secretion. A propeptide spanning residues 23–34 (EEELSETVESER) is cleaved from the precursor. 4 disulfide bridges follow: Cys-36/Cys-51, Cys-43/Cys-56, Cys-50/Cys-67, and Cys-58/Cys-65.

Belongs to the neurotoxin 02 (plectoxin) family. 04 (U16-lycotoxin) subfamily. Expressed by the venom gland.

It localises to the secreted. In Lycosa singoriensis (Wolf spider), this protein is U16-lycotoxin-Ls1a.